We begin with the raw amino-acid sequence, 609 residues long: UvrABC system protein C (609 aa).

Positions 16–94 (SSAGVYRMYD…IKQYMPRYNV (79 aa)) constitute a GIY-YIG domain. A UVR domain is found at 203–238 (QQVIATLVGKMEQAAMDLNYEDAARYRDQISALRRV).

The protein belongs to the UvrC family. Interacts with UvrB in an incision complex.

Its subcellular location is the cytoplasm. In terms of biological role, the UvrABC repair system catalyzes the recognition and processing of DNA lesions. UvrC both incises the 5' and 3' sides of the lesion. The N-terminal half is responsible for the 3' incision and the C-terminal half is responsible for the 5' incision. In Shewanella loihica (strain ATCC BAA-1088 / PV-4), this protein is UvrABC system protein C.